Consider the following 166-residue polypeptide: Large ribosomal subunit protein uL10 (166 aa).

This sequence belongs to the universal ribosomal protein uL10 family. In terms of assembly, part of the ribosomal stalk of the 50S ribosomal subunit. The N-terminus interacts with L11 and the large rRNA to form the base of the stalk. The C-terminus forms an elongated spine to which L12 dimers bind in a sequential fashion forming a multimeric L10(L12)X complex.

Its function is as follows. Forms part of the ribosomal stalk, playing a central role in the interaction of the ribosome with GTP-bound translation factors. The chain is Large ribosomal subunit protein uL10 from Lysinibacillus sphaericus (strain C3-41).